The chain runs to 93 residues: Large ribosomal subunit protein bL27 (93 aa).

A propeptide spanning residues 1-9 (MLRLDLQFF) is cleaved from the precursor.

Belongs to the bacterial ribosomal protein bL27 family. In terms of processing, the N-terminus is cleaved by ribosomal processing cysteine protease Prp.

The protein is Large ribosomal subunit protein bL27 of Bacillus licheniformis (strain ATCC 14580 / DSM 13 / JCM 2505 / CCUG 7422 / NBRC 12200 / NCIMB 9375 / NCTC 10341 / NRRL NRS-1264 / Gibson 46).